Here is an 84-residue protein sequence, read N- to C-terminus: MGKRKSKRKAPTKAKAVMPLDTQFNCPFCNHERVCEVKMDREKNVGYISCRVCSEDFQTNINYLSEPIDVYSDWVDACEQANNA.

4 residues coordinate Zn(2+): C26, C29, C50, and C53.

This sequence belongs to the ELOF1 family.

The protein resides in the nucleus. Functionally, transcription elongation factor implicated in the maintenance of proper chromatin structure in actively transcribed regions. This chain is Transcription elongation factor 1 homolog, found in Caenorhabditis elegans.